The chain runs to 320 residues: Aldose reductase (320 aa).

Catalysis depends on Tyr60, which acts as the Proton donor. His121 contributes to the substrate binding site. 215-269 (SPLGSSEKNLAHDPVVEKVANKLNKTPGQVLIKWALQRGTSVIPKSSKDERIKEN) contributes to the NADP(+) binding site.

The protein belongs to the aldo/keto reductase family.

It catalyses the reaction an alditol + NAD(+) = an aldose + NADH + H(+). The catalysed reaction is an alditol + NADP(+) = an aldose + NADPH + H(+). The chain is Aldose reductase from Hordeum vulgare (Barley).